We begin with the raw amino-acid sequence, 181 residues long: Ribonuclease HII (181 aa).

The RNase H type-2 domain maps to 1–181 (MICGIDEVGR…SLHRKSFQLI (181 aa)). 3 residues coordinate a divalent metal cation: Asp6, Glu7, and Asp98.

This sequence belongs to the RNase HII family. Requires Mn(2+) as cofactor. The cofactor is Mg(2+).

It localises to the cytoplasm. It catalyses the reaction Endonucleolytic cleavage to 5'-phosphomonoester.. Its function is as follows. Endonuclease that specifically degrades the RNA of RNA-DNA hybrids. The chain is Ribonuclease HII from Borrelia duttonii (strain Ly).